A 350-amino-acid chain; its full sequence is GTP 3',8-cyclase (350 aa).

In terms of domain architecture, Radical SAM core spans 27-245 (TFGRIATDLR…LRAHFTLVPD (219 aa)). R36 is a binding site for GTP. 2 residues coordinate [4Fe-4S] cluster: C43 and C47. Y49 provides a ligand contact to S-adenosyl-L-methionine. C50 is a binding site for [4Fe-4S] cluster. Residue R87 participates in GTP binding. Residue G91 coordinates S-adenosyl-L-methionine. T118 is a binding site for GTP. S142 is an S-adenosyl-L-methionine binding site. A GTP-binding site is contributed by K179. M213 is a binding site for S-adenosyl-L-methionine. [4Fe-4S] cluster is bound by residues C277 and C280. 282-284 (RTR) is a binding site for GTP. [4Fe-4S] cluster is bound at residue C294.

The protein belongs to the radical SAM superfamily. MoaA family. As to quaternary structure, monomer and homodimer. [4Fe-4S] cluster is required as a cofactor.

The enzyme catalyses GTP + AH2 + S-adenosyl-L-methionine = (8S)-3',8-cyclo-7,8-dihydroguanosine 5'-triphosphate + 5'-deoxyadenosine + L-methionine + A + H(+). It participates in cofactor biosynthesis; molybdopterin biosynthesis. Functionally, catalyzes the cyclization of GTP to (8S)-3',8-cyclo-7,8-dihydroguanosine 5'-triphosphate. The polypeptide is GTP 3',8-cyclase (Mycobacterium sp. (strain JLS)).